The chain runs to 215 residues: MNFDRARKKMVQEQIATRGITDRRVLDAMLKTPRHIFVQEAMAAQAYSDSSLPVGEKQTISQPYTVALMTELLELTGREKVLEIGTGSGYQTAILAALADRVYTVERIRPLALRARKCLDSLRLFNVMLRINDSEGSPIGWDEEAPFDAIIVTAGAPAVPQVLTDQLAVDGRLVIPVGDEREQRLVKIVRKNDGTLETTTSIGCRFVPLIGRQGW.

The active site involves Ser61.

This sequence belongs to the methyltransferase superfamily. L-isoaspartyl/D-aspartyl protein methyltransferase family.

It localises to the cytoplasm. It catalyses the reaction [protein]-L-isoaspartate + S-adenosyl-L-methionine = [protein]-L-isoaspartate alpha-methyl ester + S-adenosyl-L-homocysteine. Functionally, catalyzes the methyl esterification of L-isoaspartyl residues in peptides and proteins that result from spontaneous decomposition of normal L-aspartyl and L-asparaginyl residues. It plays a role in the repair and/or degradation of damaged proteins. The sequence is that of Protein-L-isoaspartate O-methyltransferase 1 from Pelobacter propionicus (strain DSM 2379 / NBRC 103807 / OttBd1).